Consider the following 471-residue polypeptide: Metal tolerance protein C1 (471 aa).

The Cytoplasmic portion of the chain corresponds to 1 to 78 (MGIIRFQILN…PGEEGEKIFR (78 aa)). Residues 79 to 99 (LGLTADIGLSVAKALTGYLCG) traverse the membrane as a helical segment. Over 100-101 (ST) the chain is Vacuolar. Residues 102 to 122 (AIIADAAHSVSDVVLSGVALV) traverse the membrane as a helical segment. The Cytoplasmic portion of the chain corresponds to 123–144 (SYRAANVPKDKEHPYGHGKFET). A helical transmembrane segment spans residues 145–165 (LGALGISAMLLATGSGIAWHA). At 166 to 192 (LDLLSIALSAAPEVIHSGHHHGIDMNH) the chain is on the vacuolar side. A helical transmembrane segment spans residues 193–213 (PILALTVTIASISIKEGLYWI). Topologically, residues 214–236 (TKRAGEKQGSGLMMANAWHHRSD) are cytoplasmic. A helical membrane pass occupies residues 237–257 (AISSLVALVGVGGSILGVNFL). The Vacuolar portion of the chain corresponds to 258 to 423 (DPLAGLVVST…RITPHLLHSK (166 aa)). A helical membrane pass occupies residues 424–444 (ILLQIVVAMPSTMSIQDVMIA). Over 445-471 (AEHAEKEILKAAPNVARVSIQLSLNSE) the chain is Cytoplasmic.

This sequence belongs to the cation diffusion facilitator (CDF) transporter (TC 2.A.4) family.

It localises to the vacuole membrane. Involved in sequestration of excess metal in the cytoplasm into vacuoles to maintain metal homeostasis. This is Metal tolerance protein C1 (MTPC1) from Arabidopsis thaliana (Mouse-ear cress).